A 422-amino-acid chain; its full sequence is 3-phosphoshikimate 1-carboxyvinyltransferase (422 aa).

3-phosphoshikimate is bound by residues K20, S21, and R25. K20 is a phosphoenolpyruvate binding site. 2 residues coordinate phosphoenolpyruvate: G90 and R118. 6 residues coordinate 3-phosphoshikimate: S163, S164, Q165, S191, D306, and K333. Position 165 (Q165) interacts with phosphoenolpyruvate. The active-site Proton acceptor is the D306. Phosphoenolpyruvate-binding residues include R337 and R378.

It belongs to the EPSP synthase family. As to quaternary structure, monomer.

The protein resides in the cytoplasm. It catalyses the reaction 3-phosphoshikimate + phosphoenolpyruvate = 5-O-(1-carboxyvinyl)-3-phosphoshikimate + phosphate. The protein operates within metabolic intermediate biosynthesis; chorismate biosynthesis. Catalyzes the transfer of the enolpyruvyl moiety of phosphoenolpyruvate (PEP) to the 5-hydroxyl of shikimate-3-phosphate (S3P) to produce enolpyruvyl shikimate-3-phosphate and inorganic phosphate. This Methanocella arvoryzae (strain DSM 22066 / NBRC 105507 / MRE50) protein is 3-phosphoshikimate 1-carboxyvinyltransferase.